The sequence spans 327 residues: Mycothiol acetyltransferase (327 aa).

N-acetyltransferase domains are found at residues 11–159 (EPHG…VTLP) and 162–327 (VQIR…EGTS). Glu42 is a binding site for 1D-myo-inositol 2-(L-cysteinylamino)-2-deoxy-alpha-D-glucopyranoside. 89–91 (LVI) is an acetyl-CoA binding site. 1D-myo-inositol 2-(L-cysteinylamino)-2-deoxy-alpha-D-glucopyranoside is bound by residues Glu189, Lys228, and Glu251. Acetyl-CoA-binding positions include 255-257 (LGV) and 262-268 (QGLGLGR). Tyr289 is a binding site for 1D-myo-inositol 2-(L-cysteinylamino)-2-deoxy-alpha-D-glucopyranoside. Residue 294-299 (NAPAIR) participates in acetyl-CoA binding.

The protein belongs to the acetyltransferase family. MshD subfamily. As to quaternary structure, monomer.

It carries out the reaction 1D-myo-inositol 2-(L-cysteinylamino)-2-deoxy-alpha-D-glucopyranoside + acetyl-CoA = mycothiol + CoA + H(+). Catalyzes the transfer of acetyl from acetyl-CoA to desacetylmycothiol (Cys-GlcN-Ins) to form mycothiol. This chain is Mycothiol acetyltransferase, found in Acidothermus cellulolyticus (strain ATCC 43068 / DSM 8971 / 11B).